We begin with the raw amino-acid sequence, 126 residues long: Major sperm protein 2 (126 aa).

A2 carries the N-acetylalanine modification. The MSP domain maps to 8–125 (DIATMPNQKV…RRKNLPIEYN (118 aa)).

In terms of tissue distribution, sperm.

The protein localises to the cell projection. It localises to the pseudopodium. Its subcellular location is the cytoplasm. The protein resides in the cytoskeleton. Central component in molecular interactions underlying sperm crawling. Forms an extensive filament system that extends from sperm villipoda, along the leading edge of the pseudopod. This Globodera rostochiensis (Golden nematode worm) protein is Major sperm protein 2 (MSP-2).